The sequence spans 867 residues: Transcription factor E2F8 (867 aa).

Positions 38 to 58 (DFGPLTTPTKPKEGSQGEPWT) are disordered. Phosphoserine occurs at positions 71 and 102. 2 DNA-binding regions span residues 113-182 (RKEK…TWHG) and 261-347 (RKDK…KWTG). Disordered regions lie at residues 408 to 432 (RRKINSAPSSPIKTNKAESSQNSAP), 532 to 616 (QSVT…SGSK), and 771 to 800 (APENAGTQQGRATNYDSPVPGQSQPNGQSV). Phosphoserine is present on residues serine 413 and serine 417. Composition is skewed to polar residues over residues 413-432 (SAPSSPIKTNKAESSQNSAP) and 532-556 (QSVTPPQGLSPTVCTTHSSKATGSK). A compositionally biased stretch (basic and acidic residues) spans 557–567 (DSTDATTEKAA). Polar residues predominate over residues 568-579 (NDTSKASASTRP). A compositionally biased stretch (basic and acidic residues) spans 594-604 (RTREPAGERGS). The span at 775-800 (AGTQQGRATNYDSPVPGQSQPNGQSV) shows a compositional bias: polar residues.

The protein belongs to the E2F/DP family. Homodimer and heterodimer: mainly forms homodimers and, to a lesser extent, heterodimers with E2F8. Dimerization is important for DNA-binding. Interacts with HIF1A.

It localises to the nucleus. In terms of biological role, atypical E2F transcription factor that participates in various processes such as angiogenesis and polyploidization of specialized cells. Mainly acts as a transcription repressor that binds DNA independently of DP proteins and specifically recognizes the E2 recognition site 5'-TTTC[CG]CGC-3'. Directly represses transcription of classical E2F transcription factors such as E2F1: component of a feedback loop in S phase by repressing the expression of E2F1, thereby preventing p53/TP53-dependent apoptosis. Plays a key role in polyploidization of cells in placenta and liver by regulating the endocycle, probably by repressing genes promoting cytokinesis and antagonizing action of classical E2F proteins (E2F1, E2F2 and/or E2F3). Required for placental development by promoting polyploidization of trophoblast giant cells. Acts as a promoter of sprouting angiogenesis, possibly by acting as a transcription activator: associates with HIF1A, recognizes and binds the VEGFA promoter, which is different from canonical E2 recognition site, and activates expression of the VEGFA gene. In Homo sapiens (Human), this protein is Transcription factor E2F8 (E2F8).